We begin with the raw amino-acid sequence, 138 residues long: Large ribosomal subunit protein uL16 (138 aa).

This sequence belongs to the universal ribosomal protein uL16 family. As to quaternary structure, part of the 50S ribosomal subunit.

Binds 23S rRNA and is also seen to make contacts with the A and possibly P site tRNAs. The protein is Large ribosomal subunit protein uL16 of Anaeromyxobacter sp. (strain Fw109-5).